The following is a 267-amino-acid chain: Glutamate 5-kinase (267 aa).

Position 18 (Lys18) interacts with ATP. 3 residues coordinate substrate: Ser58, Asp145, and Asn157. ATP-binding positions include 177 to 178 (SD) and 219 to 225 (TGGMATK).

It belongs to the glutamate 5-kinase family.

Its subcellular location is the cytoplasm. It catalyses the reaction L-glutamate + ATP = L-glutamyl 5-phosphate + ADP. It functions in the pathway amino-acid biosynthesis; L-proline biosynthesis; L-glutamate 5-semialdehyde from L-glutamate: step 1/2. Functionally, catalyzes the transfer of a phosphate group to glutamate to form L-glutamate 5-phosphate. This chain is Glutamate 5-kinase, found in Clostridium tetani (strain Massachusetts / E88).